Here is a 177-residue protein sequence, read N- to C-terminus: Coatomer subunit zeta-1 (177 aa).

At Met-1 the chain carries N-acetylmethionine.

Belongs to the adaptor complexes small subunit family. In terms of assembly, oligomeric complex that consists of at least the alpha, beta, beta', gamma, delta, epsilon and zeta subunits.

It localises to the cytoplasm. The protein resides in the golgi apparatus membrane. Its subcellular location is the cytoplasmic vesicle. The protein localises to the COPI-coated vesicle membrane. The coatomer is a cytosolic protein complex that binds to dilysine motifs and reversibly associates with Golgi non-clathrin-coated vesicles, which further mediate biosynthetic protein transport from the ER, via the Golgi up to the trans Golgi network. Coatomer complex is required for budding from Golgi membranes, and is essential for the retrograde Golgi-to-ER transport of dilysine-tagged proteins. The zeta subunit may be involved in regulating the coat assembly and, hence, the rate of biosynthetic protein transport due to its association-dissociation properties with the coatomer complex. The chain is Coatomer subunit zeta-1 (COPZ1) from Homo sapiens (Human).